A 273-amino-acid polypeptide reads, in one-letter code: NAD-dependent protein deacylase (273 aa).

A Deacetylase sirtuin-type domain is found at 20-272; the sequence is RERLRQRIFF…PEFVDKFLKG (253 aa). 48 to 67 serves as a coordination point for NAD(+); the sequence is GAGISAESGIRTFRAADGLW. Substrate-binding residues include Tyr-92 and Arg-95. Residue 129 to 132 coordinates NAD(+); the sequence is QNID. His-147 serves as the catalytic Proton acceptor. Zn(2+)-binding residues include Cys-155 and Cys-174. NAD(+) is bound by residues 214-216, 240-242, and Ala-258; these read GTS and NLE.

Belongs to the sirtuin family. Class III subfamily. Zn(2+) serves as cofactor.

The protein localises to the cytoplasm. The enzyme catalyses N(6)-acetyl-L-lysyl-[protein] + NAD(+) + H2O = 2''-O-acetyl-ADP-D-ribose + nicotinamide + L-lysyl-[protein]. It catalyses the reaction N(6)-succinyl-L-lysyl-[protein] + NAD(+) + H2O = 2''-O-succinyl-ADP-D-ribose + nicotinamide + L-lysyl-[protein]. The catalysed reaction is N(6)-(2-hydroxyisobutanoyl)-L-lysyl-[protein] + NAD(+) + H2O = 2''-O-(2-hydroxyisobutanoyl)-ADP-D-ribose + nicotinamide + L-lysyl-[protein]. Its function is as follows. NAD-dependent lysine deacetylase that specifically removes acetyl groups on target proteins. Also acts as a protein-lysine deacylase by mediating protein desuccinylation and de-2-hydroxyisobutyrylation. Modulates the activities of several proteins which are inactive in their acylated form. The sequence is that of NAD-dependent protein deacylase from Salmonella typhi.